The primary structure comprises 468 residues: Cysteine--tRNA ligase (468 aa).

Cys-28 is a binding site for Zn(2+). The 'HIGH' region motif lies at 30–40 (PTVYNYIHIGN). Zn(2+)-binding residues include Cys-212, His-237, and Glu-241. Residues 271 to 275 (KMSKS) carry the 'KMSKS' region motif. Residue Lys-274 participates in ATP binding.

The protein belongs to the class-I aminoacyl-tRNA synthetase family. As to quaternary structure, monomer. Zn(2+) serves as cofactor.

It localises to the cytoplasm. The enzyme catalyses tRNA(Cys) + L-cysteine + ATP = L-cysteinyl-tRNA(Cys) + AMP + diphosphate. The chain is Cysteine--tRNA ligase from Lacticaseibacillus casei (strain BL23) (Lactobacillus casei).